A 188-amino-acid polypeptide reads, in one-letter code: MSGGRWISNLRQVFGRSRASISSSLLPFPPTSISSGFHVPRLLDAWKNPVAAAAAFRLPQSSGFATMNQLIRHGREEKHRSDRKRALGKCPQKQGVCLRVSTRTPKKPNSALGKIAKVRLSNRNDVFAYIPGEGHNLQEHSMVLVRGGRVKDLPGVKFHCIRGVKDLLGIPDRRRGRSKYGAEKPKST.

A mitochondrion-targeting transit peptide spans 1 to 63 (MSGGRWISNL…AAFRLPQSSG (63 aa)).

It belongs to the universal ribosomal protein uS12 family.

It is found in the mitochondrion. Functionally, protein S12 is involved in the translation initiation step. In Oenothera elata subsp. hookeri (Hooker's evening primrose), this protein is Small ribosomal subunit protein uS12m (RPS12).